The chain runs to 144 residues: Large ribosomal subunit protein uL16 (144 aa).

The protein belongs to the universal ribosomal protein uL16 family. As to quaternary structure, part of the 50S ribosomal subunit.

In terms of biological role, binds 23S rRNA and is also seen to make contacts with the A and possibly P site tRNAs. The chain is Large ribosomal subunit protein uL16 from Ligilactobacillus salivarius (strain UCC118) (Lactobacillus salivarius).